A 385-amino-acid polypeptide reads, in one-letter code: Nuclear hormone receptor family member nhr-68 (385 aa).

The segment at residues Lys4–Ala79 is a DNA-binding region (nuclear receptor). 2 consecutive NR C4-type zinc fingers follow at residues Cys7–Cys27 and Cys43–Cys62. Positions Arg81–Thr110 are disordered. Residues Pro145–Asp384 enclose the NR LBD domain. The tract at residues Phe373–Asp384 is AF-2.

This sequence belongs to the nuclear hormone receptor family.

The protein localises to the nucleus. Its function is as follows. Probable transcription factor that acts in a feed-forward loop with nhr-10 to activate genes, including itself, involved in the vitamin B12-independent breakdown of the short-chain fatty acid propionate. This pathway is triggered in response to a diet low in vitamin B12, when canonical vitamin B12-dependent propionate breakdown cannot function; the resulting accumulation of propionate is probably sensed by nhr-68 and/or nhr-10. This is Nuclear hormone receptor family member nhr-68 from Caenorhabditis elegans.